A 122-amino-acid chain; its full sequence is Large ribosomal subunit protein uL14 (122 aa).

The protein belongs to the universal ribosomal protein uL14 family. Part of the 50S ribosomal subunit. Forms a cluster with proteins L3 and L19. In the 70S ribosome, L14 and L19 interact and together make contacts with the 16S rRNA in bridges B5 and B8.

In terms of biological role, binds to 23S rRNA. Forms part of two intersubunit bridges in the 70S ribosome. The chain is Large ribosomal subunit protein uL14 from Streptomyces coelicolor (strain ATCC BAA-471 / A3(2) / M145).